The sequence spans 58 residues: MLGWVVTFLIIALVAGLLGFGGIAGASIEIAKIVFFIAIVLFAVSAVVGLMRGRRPMV.

The next 2 membrane-spanning stretches (helical) occupy residues 4–24 (WVVT…GGIA) and 30–50 (IAKI…VVGL).

Belongs to the UPF0391 family.

Its subcellular location is the cell membrane. This chain is UPF0391 membrane protein OCAR_5266/OCA5_c27040, found in Afipia carboxidovorans (strain ATCC 49405 / DSM 1227 / KCTC 32145 / OM5) (Oligotropha carboxidovorans).